The following is a 360-amino-acid chain: Phospho-N-acetylmuramoyl-pentapeptide-transferase (360 aa).

Transmembrane regions (helical) follow at residues 2-22, 26-46, 73-93, 97-117, 134-154, 168-188, 199-219, 236-256, 263-283, 288-308, and 339-359; these read LVWVADFLAQYFSIFSVFQYL, AILGVLTALLISLLVGPVMIR, TMGGALILVAIAVSTLLWADL, YVLITLGVTLLFGAIGWVDDW, YFWQSVFGFGAAVLLFKTAHL, ITLALGVGFVLLTYFVIVGGS, GLAIMPTVMVGGALAVFAYLS, TGELVIFLGALVGAGLGFLWF, VFMGDVGALALGAALGVVAVI, LVFFVMGGVFVMETVSVILQV, and IVRFWVITVVLVLVGLATLKI.

It belongs to the glycosyltransferase 4 family. MraY subfamily. Mg(2+) is required as a cofactor.

The protein resides in the cell inner membrane. The catalysed reaction is UDP-N-acetyl-alpha-D-muramoyl-L-alanyl-gamma-D-glutamyl-meso-2,6-diaminopimeloyl-D-alanyl-D-alanine + di-trans,octa-cis-undecaprenyl phosphate = di-trans,octa-cis-undecaprenyl diphospho-N-acetyl-alpha-D-muramoyl-L-alanyl-D-glutamyl-meso-2,6-diaminopimeloyl-D-alanyl-D-alanine + UMP. Its pathway is cell wall biogenesis; peptidoglycan biosynthesis. Catalyzes the initial step of the lipid cycle reactions in the biosynthesis of the cell wall peptidoglycan: transfers peptidoglycan precursor phospho-MurNAc-pentapeptide from UDP-MurNAc-pentapeptide onto the lipid carrier undecaprenyl phosphate, yielding undecaprenyl-pyrophosphoryl-MurNAc-pentapeptide, known as lipid I. This Hahella chejuensis (strain KCTC 2396) protein is Phospho-N-acetylmuramoyl-pentapeptide-transferase.